We begin with the raw amino-acid sequence, 214 residues long: Ribonuclease HII (214 aa).

In terms of domain architecture, RNase H type-2 spans 26–214 (EIVCGVDEAG…PVRAALDLIR (189 aa)). Positions 32, 33, and 124 each coordinate a divalent metal cation.

This sequence belongs to the RNase HII family. Mn(2+) is required as a cofactor. The cofactor is Mg(2+).

It localises to the cytoplasm. The catalysed reaction is Endonucleolytic cleavage to 5'-phosphomonoester.. Its function is as follows. Endonuclease that specifically degrades the RNA of RNA-DNA hybrids. The chain is Ribonuclease HII from Burkholderia cenocepacia (strain HI2424).